Here is a 91-residue protein sequence, read N- to C-terminus: Putative defensin-like protein 145 (91 aa).

Positions 1–26 (MNKNIIFSFTVLTLFVIFVQVTGVIG) are cleaved as a signal peptide. N-linked (GlcNAc...) asparagine glycans are attached at residues Asn-35 and Asn-68. 4 disulfide bridges follow: Cys-39–Cys-84, Cys-52–Cys-74, Cys-57–Cys-78, and Cys-61–Cys-80.

The protein belongs to the DEFL family.

The protein resides in the secreted. This Arabidopsis thaliana (Mouse-ear cress) protein is Putative defensin-like protein 145 (LCR2).